The primary structure comprises 802 residues: Ribosome-releasing factor 2, mitochondrial (802 aa).

The region spanning 13 to 297 (KKIRNIGIIA…AVVDFLPSPA (285 aa)) is the tr-type G domain. Residues 22 to 29 (AHIDAGKT), 86 to 90 (DTPGH), and 140 to 143 (NKMD) each bind GTP.

The protein belongs to the TRAFAC class translation factor GTPase superfamily. Classic translation factor GTPase family. EF-G/EF-2 subfamily.

Its subcellular location is the mitochondrion. In terms of biological role, mitochondrial GTPase that mediates the disassembly of ribosomes from messenger RNA at the termination of mitochondrial protein biosynthesis. Not involved in the GTP-dependent ribosomal translocation step during translation elongation. The chain is Ribosome-releasing factor 2, mitochondrial from Yarrowia lipolytica (strain CLIB 122 / E 150) (Yeast).